We begin with the raw amino-acid sequence, 317 residues long: Osteopontin (317 aa).

The signal sequence occupies residues 1–16 (MRLAVVCFCLFGLASC). S26, S27, S60, S62, and S63 each carry phosphoserine. The tract at residues 43–297 (WLKPDPSQKQ…LVLDPKSKED (255 aa)) is disordered. The segment covering 49–63 (SQKQNLLAPQNSVSS) has biased composition (polar residues). T66 carries the phosphothreonine modification. Phosphoserine is present on residues S76, S78, S81, S106, S109, S112, S115, and S118. Over residues 86-110 (DDDDDDDDDGDHAESEDSVNSDESD) the composition is skewed to acidic residues. T123, T132, and T137 each carry an O-linked (GalNAc...) threonine glycan. The Cell attachment site signature appears at 144–146 (RGD). Residues T170 and T175 each carry the phosphothreonine modification. The segment covering 174-187 (LTSRMKSQESDEAI) has biased composition (basic and acidic residues). 7 positions are modified to phosphoserine: S176, S180, S200, S204, S209, S213, and S219. Positions 197–216 (SVPSDQDSNGKTSHESSQLD) are enriched in polar residues. Residue S219 is glycosylated (O-linked (Xyl...) (chondroitin sulfate) serine). Residue T222 is modified to Phosphothreonine. Basic and acidic residues-rich tracts occupy residues 223–240 (HSLEQSKEYKQRASHEST) and 248–263 (SAEKPDAIDSAERSDA). S224, S228, S257, S261, S266, S270, S273, S278, S283, S294, S306, S311, S313, and S314 each carry phosphoserine. Over residues 273-297 (SLEHQSHEFHSHEDKLVLDPKSKED) the composition is skewed to basic and acidic residues. A glycan (O-linked (Xyl...) (chondroitin sulfate) serine) is linked at S311.

The protein belongs to the osteopontin family. Interacts (via N-terminus) with integrin ITGA9:ITGB1. Extensively phosphorylated by FAM20C in the extracellular medium at multiple sites within the S-x-E/pS motif. The phosphorylated form inhibits hydroxyapatite crystallization. Dephosphorylation via a mechanism involving ALPL/TNAP promotes hydroxyapatite crystallization. In terms of processing, O-glycosylated. Post-translationally, forms covalent cross-links mediated by transglutaminase TGM2, between a glutamine and the epsilon-amino group of a lysine residue, forming homopolymers and heteropolymers, increasing its collagen binding properties.

The protein localises to the secreted. Its function is as follows. Major non-collagenous bone protein that binds tightly to hydroxyapatite. Appears to form an integral part of the mineralized matrix. Probably important to cell-matrix interaction. In terms of biological role, acts as a cytokine involved in enhancing production of interferon-gamma and interleukin-12 and reducing production of interleukin-10 and is essential in the pathway that leads to type I immunity. The polypeptide is Osteopontin (Spp1) (Rattus norvegicus (Rat)).